The primary structure comprises 364 residues: 3-dehydroquinate synthase (364 aa).

NAD(+) is bound by residues 105 to 109 (GVVGD), 129 to 130 (TT), Lys-142, and Lys-151. Glu-184, His-247, and His-264 together coordinate Zn(2+).

This sequence belongs to the sugar phosphate cyclases superfamily. Dehydroquinate synthase family. It depends on Co(2+) as a cofactor. Zn(2+) is required as a cofactor. NAD(+) serves as cofactor.

Its subcellular location is the cytoplasm. It carries out the reaction 7-phospho-2-dehydro-3-deoxy-D-arabino-heptonate = 3-dehydroquinate + phosphate. Its pathway is metabolic intermediate biosynthesis; chorismate biosynthesis; chorismate from D-erythrose 4-phosphate and phosphoenolpyruvate: step 2/7. Functionally, catalyzes the conversion of 3-deoxy-D-arabino-heptulosonate 7-phosphate (DAHP) to dehydroquinate (DHQ). The sequence is that of 3-dehydroquinate synthase from Acidithiobacillus ferrooxidans (strain ATCC 23270 / DSM 14882 / CIP 104768 / NCIMB 8455) (Ferrobacillus ferrooxidans (strain ATCC 23270)).